Consider the following 129-residue polypeptide: MPRDFSRTERVGDQIQRELAELIRMELKDPRVGMVTLAGVEVSRDLAHAKVWFTVLGSEQQIADTTEGLQRAAGFLRRELGRRMRLRTVPHLHFQYDDTQEKGARLSALIDKAVAEDRAQHPDDDEDRS.

It belongs to the RbfA family. As to quaternary structure, monomer. Binds 30S ribosomal subunits, but not 50S ribosomal subunits or 70S ribosomes.

It localises to the cytoplasm. In terms of biological role, one of several proteins that assist in the late maturation steps of the functional core of the 30S ribosomal subunit. Associates with free 30S ribosomal subunits (but not with 30S subunits that are part of 70S ribosomes or polysomes). Required for efficient processing of 16S rRNA. May interact with the 5'-terminal helix region of 16S rRNA. The sequence is that of Ribosome-binding factor A from Thioalkalivibrio sulfidiphilus (strain HL-EbGR7).